Consider the following 512-residue polypeptide: CaM kinase-like vesicle-associated protein (512 aa).

The 263-residue stretch at 24 to 286 (YDLGQVIKTE…AEEAISHEWI (263 aa)) folds into the Protein kinase domain. A disordered region spans residues 328 to 347 (APEQSGTAATQSASDAATPG). Over residues 332–347 (SGTAATQSASDAATPG) the composition is skewed to low complexity. At S392 the chain carries Phosphoserine. Residues 393 to 512 (ADRSATPATD…AQESQRVETS (120 aa)) form a disordered region. Residues 398–439 (TPATDGSATPATDGSVTPATDGSITPATDGSVTPATDRSATP) are compositionally biased toward polar residues. T446 is modified (phosphothreonine). The span at 449–460 (TEESTVPATQSS) shows a compositional bias: polar residues. Residues 461 to 478 (ALPAAKAAATPEPAVAQP) are compositionally biased toward low complexity. A Phosphothreonine modification is found at T470.

Belongs to the protein kinase superfamily. CAMK Ser/Thr protein kinase family. Interacts with calmodulin, in the presence of calcium. Ca(2+) serves as cofactor.

It localises to the cell membrane. It is found in the cytoplasmic vesicle membrane. In terms of biological role, does not appear to have detectable kinase activity. This is CaM kinase-like vesicle-associated protein (Camkv) from Mus musculus (Mouse).